The chain runs to 244 residues: Ethylene-responsive transcription factor 1 (244 aa).

Positions 106-164 (HYRGVRQRPWGKFAAEIRDPAKNGARVWLGTYESAEEAALAYGKAAFRMRGTKALLNFP) form a DNA-binding region, AP2/ERF. Low complexity predominate over residues 186–198 (SASSSVSSASESG). The disordered stretch occupies residues 186–214 (SASSSVSSASESGSPKRRRKGVAAKQAEL).

It belongs to the ethylene-response factor family. Class 1 subfamily. As to expression, present in stems.

Its subcellular location is the nucleus. Involved in the regulation of gene expression during fruit ripening, by stress factors and by components of stress signal transduction pathways. Transcription factor that binds to the GCC-box pathogenesis-related promoter element. Probably acts as a transcriptional activator and may be involved in disease resistance pathways. The polypeptide is Ethylene-responsive transcription factor 1 (ERF1) (Solanum lycopersicum (Tomato)).